Here is a 492-residue protein sequence, read N- to C-terminus: Transcript termination protein OPG145 (492 aa).

The Helicase ATP-binding domain maps to 100 to 256 (MIELKRPLYI…NSIINIAKLS (157 aa)). 113–120 (LACGFGKT) is a binding site for ATP. The DEAH box motif lies at 206-209 (DESH).

The protein belongs to the helicase family. Poxviruses subfamily. Interacts with OPG087. Might be part of a transcription complex composed at least of OPG087, OPG110, and OPG145.

It is found in the virion. Functionally, DNA helicase which seems to act as a postreplicative transcription termination factor. Involved in ATP-dependent release of nascent RNA. Forms a stable complex with single-stranded DNA, and to a lesser extent RNA. The chain is Transcript termination protein OPG145 (OPG145) from Cynomys gunnisoni (Gunnison's prairie dog).